The primary structure comprises 176 residues: NAD(P)H-quinone oxidoreductase subunit 6, chloroplastic (176 aa).

Helical transmembrane passes span 10–30, 32–52, 61–81, 92–112, and 152–172; these read FLLV…VLLP, PIYS…FYIL, AQLL…VMFI, LWTV…VSLI, and FFLP…GAIA.

The protein belongs to the complex I subunit 6 family. As to quaternary structure, NDH is composed of at least 16 different subunits, 5 of which are encoded in the nucleus.

It is found in the plastid. The protein resides in the chloroplast thylakoid membrane. It catalyses the reaction a plastoquinone + NADH + (n+1) H(+)(in) = a plastoquinol + NAD(+) + n H(+)(out). It carries out the reaction a plastoquinone + NADPH + (n+1) H(+)(in) = a plastoquinol + NADP(+) + n H(+)(out). NDH shuttles electrons from NAD(P)H:plastoquinone, via FMN and iron-sulfur (Fe-S) centers, to quinones in the photosynthetic chain and possibly in a chloroplast respiratory chain. The immediate electron acceptor for the enzyme in this species is believed to be plastoquinone. Couples the redox reaction to proton translocation, and thus conserves the redox energy in a proton gradient. The chain is NAD(P)H-quinone oxidoreductase subunit 6, chloroplastic (ndhG) from Lactuca sativa (Garden lettuce).